The sequence spans 528 residues: D-3-phosphoglycerate dehydrogenase (528 aa).

NAD(+) contacts are provided by residues 151–152 (RI), D171, 230–232 (AAR), and D256. The active site involves R232. The active site involves E261. Catalysis depends on H279, which acts as the Proton donor. 279–282 (HLGA) is an NAD(+) binding site. In terms of domain architecture, ACT spans 455–528 (NLVIRYVDQP…ANKLEVVNLS (74 aa)).

This sequence belongs to the D-isomer specific 2-hydroxyacid dehydrogenase family.

It catalyses the reaction (2R)-3-phosphoglycerate + NAD(+) = 3-phosphooxypyruvate + NADH + H(+). It carries out the reaction (R)-2-hydroxyglutarate + NAD(+) = 2-oxoglutarate + NADH + H(+). Its pathway is amino-acid biosynthesis; L-serine biosynthesis; L-serine from 3-phospho-D-glycerate: step 1/3. Catalyzes the reversible oxidation of 3-phospho-D-glycerate to 3-phosphonooxypyruvate, the first step of the phosphorylated L-serine biosynthesis pathway. Also catalyzes the reversible oxidation of 2-hydroxyglutarate to 2-oxoglutarate. The protein is D-3-phosphoglycerate dehydrogenase (serA) of Mycobacterium leprae (strain TN).